The chain runs to 373 residues: UDP-N-acetylenolpyruvoylglucosamine reductase (373 aa).

The FAD-binding PCMH-type domain maps to 30 to 203; the sequence is LACMADSVVT…SRVGFRLHTD (174 aa). R180 is a catalytic residue. The Proton donor role is filled by S258. E356 is an active-site residue.

Belongs to the MurB family. It depends on FAD as a cofactor.

Its subcellular location is the cytoplasm. It catalyses the reaction UDP-N-acetyl-alpha-D-muramate + NADP(+) = UDP-N-acetyl-3-O-(1-carboxyvinyl)-alpha-D-glucosamine + NADPH + H(+). It participates in cell wall biogenesis; peptidoglycan biosynthesis. Cell wall formation. The sequence is that of UDP-N-acetylenolpyruvoylglucosamine reductase from Psychrobacter cryohalolentis (strain ATCC BAA-1226 / DSM 17306 / VKM B-2378 / K5).